The primary structure comprises 651 residues: Nucleolin (651 aa).

The span at 1–11 (MVKLAKGAKTQ) shows a compositional bias: low complexity. Positions 1 to 230 (MVKLAKGAKT…AKKTKTDTAS (230 aa)) are disordered. Residues 26-45 (EDSEEEEDMEEDDSSDEEVE) show a composition bias toward acidic residues. A compositionally biased stretch (low complexity) spans 54 to 79 (KKTATPAKATPGKAATPGKKGATPAK). Residues 89–101 (SEEEEDDSDEEAE) are compositionally biased toward acidic residues. Residues 106 to 116 (IKNKPVAKKAV) are compositionally biased toward basic residues. Acidic residues-rich tracts occupy residues 122-134 (SEED…ESEE), 155-168 (SEEE…DEPM), and 183-204 (AEED…EEEQ). Residue serine 155 is modified to Phosphoserine. Positions 219–228 (PEAKKTKTDT) are enriched in basic and acidic residues. 4 consecutive RRM domains span residues 233-309 (LSIF…KAMA), 325-399 (RTLF…FTGE), 415-488 (KVLV…FSQG), and 503-578 (KTLF…FAKP). Residues 574–651 (DFAKPKGDSQ…GQGKKMRFDD (78 aa)) are disordered. Gly residues predominate over residues 585 to 644 (GGRGGFGRGGGFRGGRGGRGGGGGRGFGGRGGGRGRGGFGGRGGGGFRGGQGGGFRGGQG).

The protein localises to the nucleus. The protein resides in the nucleolus. Functionally, nucleolin is the major nucleolar protein of growing eukaryotic cells. It is found associated with intranucleolar chromatin and pre-ribosomal particles. It induces chromatin decondensation by binding to histone H1. It is thought to play a role in pre-rRNA transcription and ribosome assembly. The sequence is that of Nucleolin (ncl) from Xenopus laevis (African clawed frog).